The primary structure comprises 416 residues: CinA-like protein (416 aa).

This sequence belongs to the CinA family.

This Syntrophomonas wolfei subsp. wolfei (strain DSM 2245B / Goettingen) protein is CinA-like protein.